A 791-amino-acid polypeptide reads, in one-letter code: MQAGPVQAVPPPPPVATESKQPIEEEASSKEDPTPSKPVVGIIYPPPEVRNIVDKTASFVARNGPEFEARIRQNEINNPKFNFLNPNDPYHAYYRHKVSEFKEGKAQEPSAAIPKVMQQQQQATQQQLPQKVQAQVIQETIVPKEPPPEFEFIADPPSISAFDLDVVKLTAQFVARNGRQFLTQLMQKEQRNYQFDFLRPQHSLFNYFTKLVEQYTKILIPPKGLFSKLKKEAENPREVLDQVCYRVEWAKFQERERKKEEEEKEKERVAYAQIDWHDFVVVETVDFQPNEQGNFPPPTTPEELGARILIQERYEKFGESEEVEMEVESDEEDQEKAEETPSQLDQDTQVQDMDEGSDDEEEGQKVPPPPETPMPPPLPPTPDQVIVRKDYDPKASKPLPPAPAPDEYLVSPITGEKIPASKMQEHMRIGLLDPRWLEQRDRSIREKQSDDEVYAPGLDIESSLKQLAERRTDIFGVEETAIGKKIGEEEIQKPEEKVTWDGHSGSMARTQQAAQANITLQEQIEAIHKAKGLVPEDDTKEKIGPSKPNEIPQQPPPPSSATNIPSSAPPITSVPRPPAMPPPVRTTVVSAVPVMPRPPMASVVRLPPGSVIAPMPPIIHAPRINVVPMPPAAPPIMAPRPPPMIVPTAFVPAPPVAPVPAPAPMPPVHPPPPMEDEPPSKKLKTEDSLMPEEEFLRRNKGPVSIKVQVPNMQDKTEWKLNGQGLVFTLPLTDQVSVIKVKIHEATGMPAGKQKLQYEGIFIKDSNSLAYYNMASGAVIHLALKERGGRKK.

Residues 1–41 form a disordered region; that stretch reads MQAGPVQAVPPPPPVATESKQPIEEEASSKEDPTPSKPVVG. A Glycyl lysine isopeptide (Lys-Gly) (interchain with G-Cter in SUMO2) cross-link involves residue lysine 20. A compositionally biased stretch (basic and acidic residues) spans 21-34; the sequence is QPIEEEASSKEDPT. The stretch at 52–94 is one SURP motif 1 repeat; that stretch reads IVDKTASFVARNGPEFEARIRQNEINNPKFNFLNPNDPYHAYY. Position 55 is an N6-acetyllysine (lysine 55). A Glycyl lysine isopeptide (Lys-Gly) (interchain with G-Cter in SUMO2) cross-link involves residue lysine 131. Residues 166-208 form an SURP motif 2 repeat; the sequence is VVKLTAQFVARNGRQFLTQLMQKEQRNYQFDFLRPQHSLFNYF. The interval 318–411 is disordered; sequence GESEEVEMEV…APAPDEYLVS (94 aa). Serine 320 and serine 329 each carry phosphoserine. Over residues 320–336 the composition is skewed to acidic residues; sequence SEEVEMEVESDEEDQEK. A compositionally biased stretch (polar residues) spans 340-351; it reads TPSQLDQDTQVQ. The span at 352 to 362 shows a compositional bias: acidic residues; that stretch reads DMDEGSDDEEE. At serine 357 the chain carries Phosphoserine. Residues 366–382 are compositionally biased toward pro residues; that stretch reads VPPPPETPMPPPLPPTP. Residues 386 to 395 are compositionally biased toward basic and acidic residues; that stretch reads IVRKDYDPKA. A Phosphoserine modification is found at serine 411. Residue lysine 422 forms a Glycyl lysine isopeptide (Lys-Gly) (interchain with G-Cter in SUMO2) linkage. The residue at position 449 (serine 449) is a Phosphoserine. Residue tyrosine 454 is modified to Phosphotyrosine. Basic and acidic residues predominate over residues 486-500; it reads IGEEEIQKPEEKVTW. Disordered stretches follow at residues 486 to 516, 528 to 582, and 664 to 684; these read IGEE…AAQA, HKAK…AMPP, and PMPP…KKLK. Residue lysine 497 forms a Glycyl lysine isopeptide (Lys-Gly) (interchain with G-Cter in SUMO2) linkage. Serine 506 is subject to Phosphoserine. The span at 507 to 516 shows a compositional bias: polar residues; that stretch reads MARTQQAAQA. Residue lysine 540 forms a Glycyl lysine isopeptide (Lys-Gly) (interchain with G-Cter in SUMO2) linkage. Over residues 561–570 the composition is skewed to polar residues; it reads ATNIPSSAPP. A compositionally biased stretch (pro residues) spans 664–673; sequence PMPPVHPPPP. Positions 678–700 are required and sufficient for nuclear import; the sequence is PPSKKLKTEDSLMPEEEFLRRNK. Lysine 684 is covalently cross-linked (Glycyl lysine isopeptide (Lys-Gly) (interchain with G-Cter in SUMO2)). Residues 705 to 788 form the Ubiquitin-like domain; it reads IKVQVPNMQD…IHLALKERGG (84 aa). Residue tyrosine 757 is modified to Phosphotyrosine.

Component of the 17S U2 SnRNP complex, a ribonucleoprotein complex that contains small nuclear RNA (snRNA) U2 and a number of specific proteins. Part of the SF3A subcomplex of the 17S U2 SnRNP complex which is composed of three subunits; SF3A3/SAP61, SF3A2/SAP62 and SF3A1/SAP114. SF3A associates with the splicing factor SF3B and a 12S RNA unit to form the mature 17S U2 small nuclear ribonucleoprotein complex (17S U2 snRNP). SF3A1 functions as a scaffold that interacts directly with both SF3A2 and SF3A3. Identified in the spliceosome 'E' complex, a precursor of the spliceosome 'A' complex. Identified in the spliceosome 'A' and 'B' complexes. Identified in the spliceosome 'C' complex. Interacts with P2RX6; resulting in a reduction of the splicing activity.

The protein localises to the nucleus. It localises to the nucleus speckle. Functionally, component of the 17S U2 SnRNP complex of the spliceosome, a large ribonucleoprotein complex that removes introns from transcribed pre-mRNAs. The 17S U2 SnRNP complex (1) directly participates in early spliceosome assembly and (2) mediates recognition of the intron branch site during pre-mRNA splicing by promoting the selection of the pre-mRNA branch-site adenosine, the nucleophile for the first step of splicing. Within the 17S U2 SnRNP complex, SF3A1 is part of the SF3A subcomplex that contributes to the assembly of the 17S U2 snRNP, and the subsequent assembly of the pre-spliceosome 'E' complex and the pre-catalytic spliceosome 'A' complex. Involved in pre-mRNA splicing as a component of pre-catalytic spliceosome 'B' complexes. The protein is Splicing factor 3A subunit 1 (Sf3a1) of Mus musculus (Mouse).